Here is a 144-residue protein sequence, read N- to C-terminus: Small ribosomal subunit protein bS6 (144 aa).

The tract at residues 97-144 (DTEQSLIMKSKDEKGDKPERSERRRRDDEEVDAAPAATDTDGDNAEAA) is disordered. The segment covering 105-124 (KSKDEKGDKPERSERRRRDD) has biased composition (basic and acidic residues).

The protein belongs to the bacterial ribosomal protein bS6 family.

Its function is as follows. Binds together with bS18 to 16S ribosomal RNA. This Xanthomonas campestris pv. campestris (strain B100) protein is Small ribosomal subunit protein bS6.